The sequence spans 359 residues: Structure-specific endonuclease subunit SLX1 homolog (359 aa).

The GIY-YIG domain occupies glycine 9–asparagine 91. The segment at cysteine 192–cysteine 238 adopts an SLX1-type zinc-finger fold. Residues valine 256–aspartate 359 are disordered. The segment covering valine 269 to tyrosine 281 has biased composition (polar residues). Positions glutamate 295–serine 306 are enriched in basic and acidic residues. Low complexity predominate over residues serine 316 to serine 326.

Belongs to the SLX1 family. Forms a heterodimer with a member of the SLX4 family. Requires a divalent metal cation as cofactor.

The protein resides in the nucleus. In terms of biological role, catalytic subunit of a heterodimeric structure-specific endonuclease that resolves DNA secondary structures generated during DNA repair and recombination. Has endonuclease activity towards branched DNA substrates, introducing single-strand cuts in duplex DNA close to junctions with ss-DNA. This chain is Structure-specific endonuclease subunit SLX1 homolog, found in Giardia intestinalis (strain ATCC 50803 / WB clone C6) (Giardia lamblia).